Consider the following 318-residue polypeptide: 2,4-dinitroanisole O-demethylase subunit beta (318 aa).

This sequence belongs to the metallo-beta-lactamase superfamily. As to quaternary structure, part of the complex DnhAB composed of the 2,4-dinitroanisole O-demethylase alpha (DnhA) and beta (DnhB) subunits.

The enzyme catalyses 2,4-dinitroanisole + H2O = 2,4-dinitrophenol + methanol + H(+). Involved in the degradation of 2,4-dinitroanisole (DNAN), an insensitive munition ingredient used in explosive formulations as a replacement for 2,4,6-trinitrotoluene (TNT). Catalyzes the removal of the methyl group from 2,4-dinitroanisole (DNAN) to yield 2,4-dinitrophenol (2,4-DNP) and methanol. The protein is 2,4-dinitroanisole O-demethylase subunit beta of Nocardioides sp. (strain JS1661).